Consider the following 682-residue polypeptide: Potassium-transporting ATPase ATP-binding subunit (682 aa).

The next 4 membrane-spanning stretches (helical) occupy residues 34–54 (PVMFVVWAGSVLTTLLTLAMV), 58–78 (IAGSALFTGVISLWLWFTVLF), 219–239 (IALTILLIALTIVFLLATATL), and 254–274 (VLVALLVCLIPTTIGGLLSAI). The active-site 4-aspartylphosphate intermediate is the Asp-307. Residues Asp-344, Glu-348, 377–384 (FTAQSRMS), and Lys-395 contribute to the ATP site. Positions 518 and 522 each coordinate Mg(2+). 3 helical membrane passes run 588–608 (FAIIPAAFAATYPQLNALNVM), 616–636 (AILSAVIFNALIIIFLIPLAL), and 662–682 (LVVPFIGIKVIDVLLTLLGLA).

The protein belongs to the cation transport ATPase (P-type) (TC 3.A.3) family. Type IA subfamily. The system is composed of three essential subunits: KdpA, KdpB and KdpC.

It is found in the cell inner membrane. The catalysed reaction is K(+)(out) + ATP + H2O = K(+)(in) + ADP + phosphate + H(+). Functionally, part of the high-affinity ATP-driven potassium transport (or Kdp) system, which catalyzes the hydrolysis of ATP coupled with the electrogenic transport of potassium into the cytoplasm. This subunit is responsible for energy coupling to the transport system and for the release of the potassium ions to the cytoplasm. In Salmonella paratyphi B (strain ATCC BAA-1250 / SPB7), this protein is Potassium-transporting ATPase ATP-binding subunit.